We begin with the raw amino-acid sequence, 504 residues long: One cut domain family member 2 (504 aa).

Disordered regions lie at residues 29 to 95 (LGTL…GTAA), 166 to 189 (KFHHPHPHHHPHHHHHHHHQRLSG), 274 to 332 (EQHL…QLEE), and 485 to 504 (WQDDLSTGGSSSTSSTCTKA). A compositionally biased stretch (gly residues) spans 35–56 (PAGGGSGGGGGGGGGGGGGGPG). The segment covering 168–186 (HHPHPHHHPHHHHHHHHQR) has biased composition (basic residues). The segment at residues 324–410 (VATSGQLEEI…QRMSALRLAA (87 aa)) is a DNA-binding region (CUT). The homeobox DNA-binding region spans 426–485 (QKKSRLVFTDLQRRTLFAIFKENKRPSKEMQITISQQLGLELTTVSNFFMNARRRSLEKW). Over residues 490 to 504 (STGGSSSTSSTCTKA) the composition is skewed to low complexity.

The protein belongs to the CUT homeobox family.

It localises to the nucleus. In terms of biological role, transcriptional activator. Activates the transcription of a number of liver genes such as HNF3B. The protein is One cut domain family member 2 (ONECUT2) of Homo sapiens (Human).